A 334-amino-acid polypeptide reads, in one-letter code: MSSAEVTAAAKPADAPEHCPGTASESAGKASACAGCPNQQICATGPKGPDPSIALVKEKLREVRNKVLVLSGKGGVGKSTVTALLSRAMAQHNPDRNFGVLDIDICGPSQPRVLGVLGEQVHQSGSGWSPVYIEDNLSLMSIGFLLGSPDDAIIWRGPKKNGMIRQFLTEVDWGQLDYLVLDTPPGTSDEHLSAATFLKVTDGRWGAVLVTTPQEVALLDVRKEITFCKKMAIPVVGVVENMSVFVCPKCATESDIFPAKTGGAERMCADMEVRYLGKLPLDPRLAKCCDEGKDFLAEHAGSPTVTALKGIVARVQEFFETDRLTCTCVKRVLT.

Residues 1–24 are disordered; the sequence is MSSAEVTAAAKPADAPEHCPGTAS. The [4Fe-4S] cluster site is built by C19, C33, C36, and C42. Position 72–79 (72–79) interacts with ATP; that stretch reads GKGGVGKS. Residues C247 and C250 each contribute to the [4Fe-4S] cluster site.

Belongs to the Mrp/NBP35 ATP-binding proteins family. NUBP1/NBP35 subfamily. Heterotetramer of 2 NUBP1 and 2 NUBP2 chains. [4Fe-4S] cluster serves as cofactor.

Its subcellular location is the cytoplasm. Its function is as follows. Component of the cytosolic iron-sulfur (Fe/S) protein assembly (CIA) machinery. Required for maturation of extramitochondrial Fe-S proteins. The NUBP1-NUBP2 heterotetramer forms a Fe-S scaffold complex, mediating the de novo assembly of an Fe-S cluster and its transfer to target apoproteins. This is Cytosolic Fe-S cluster assembly factor NUBP1 homolog from Culex quinquefasciatus (Southern house mosquito).